A 217-amino-acid polypeptide reads, in one-letter code: Probable transaldolase (217 aa).

Catalysis depends on Lys83, which acts as the Schiff-base intermediate with substrate.

This sequence belongs to the transaldolase family. Type 3B subfamily.

Its subcellular location is the cytoplasm. It carries out the reaction D-sedoheptulose 7-phosphate + D-glyceraldehyde 3-phosphate = D-erythrose 4-phosphate + beta-D-fructose 6-phosphate. The protein operates within carbohydrate degradation; pentose phosphate pathway; D-glyceraldehyde 3-phosphate and beta-D-fructose 6-phosphate from D-ribose 5-phosphate and D-xylulose 5-phosphate (non-oxidative stage): step 2/3. Its function is as follows. Transaldolase is important for the balance of metabolites in the pentose-phosphate pathway. The polypeptide is Probable transaldolase (Caulobacter sp. (strain K31)).